Consider the following 267-residue polypeptide: Tryptophan synthase alpha chain (267 aa).

Catalysis depends on proton acceptor residues Glu-47 and Asp-58.

It belongs to the TrpA family. In terms of assembly, tetramer of two alpha and two beta chains.

It catalyses the reaction (1S,2R)-1-C-(indol-3-yl)glycerol 3-phosphate + L-serine = D-glyceraldehyde 3-phosphate + L-tryptophan + H2O. It functions in the pathway amino-acid biosynthesis; L-tryptophan biosynthesis; L-tryptophan from chorismate: step 5/5. The alpha subunit is responsible for the aldol cleavage of indoleglycerol phosphate to indole and glyceraldehyde 3-phosphate. This is Tryptophan synthase alpha chain from Chlorobium phaeobacteroides (strain DSM 266 / SMG 266 / 2430).